We begin with the raw amino-acid sequence, 332 residues long: GDP-mannose transporter 2 (332 aa).

The Cytoplasmic segment spans residues 1–12; it reads MSSLKVSQQDKK. The helical transmembrane segment at 13–33 threads the bilayer; it reads WVNSGSVAILAYCASSILMTI. Residues 34-47 are Lumenal-facing; it reads TNKVVMSDRTFNMN. A helical membrane pass occupies residues 48 to 68; it reads FLLLFIQSLVCVITLLVLKVL. Residues 69-84 are Cytoplasmic-facing; sequence GSVNFRSFNKTDARNW. A helical transmembrane segment spans residues 85–105; sequence FPISICLVLMIFTSSKSLQYL. Residues 106 to 108 lie on the Lumenal side of the membrane; sequence SVP. The chain crosses the membrane as a helical span at residues 109-129; it reads VYTIFKNLTIIVIAYGEVLFF. The Cytoplasmic segment spans residues 130-131; it reads GS. A helical membrane pass occupies residues 132 to 152; the sequence is SVGNMELGSFALMIVSSLIAA. Topologically, residues 153 to 174 are lumenal; sequence HGDYLHSVERLKKMLGPNVSFS. Asn170 carries an N-linked (GlcNAc...) asparagine glycan. The helical transmembrane segment at 175–195 threads the bilayer; that stretch reads FIVNIGYFWIAANCFASALFV. At 196–211 the chain is on the cytoplasmic side; that stretch reads LLMRKRIQVTNFKDFD. The helical transmembrane segment at 212 to 232 threads the bilayer; it reads TMFYNNVLSLPLLLLGSYLFE. The Lumenal portion of the chain corresponds to 233–248; it reads DWSQENLLPHVDIDNL. N-linked (GlcNAc...) asparagine glycosylation is present at Asn247. Residues 249-269 traverse the membrane as a helical segment; the sequence is STMIISGLASVAISYCSGWCV. Residues 270–274 lie on the Cytoplasmic side of the membrane; the sequence is RVTSS. A helical transmembrane segment spans residues 275–295; the sequence is TTYSMVGALNKLPIALTGFLF. Topologically, residues 296–300 are lumenal; sequence NDAAR. The helical transmembrane segment at 301–321 threads the bilayer; sequence NLSSAASILLGFASGIIYAVA. Residues 322 to 332 are Cytoplasmic-facing; the sequence is KQKKLQNSEKI.

The protein belongs to the TPT transporter family. SLC35D subfamily. As to quaternary structure, homooligomer.

It is found in the golgi apparatus membrane. It localises to the cytoplasmic vesicle membrane. The protein resides in the endoplasmic reticulum membrane. Involved in the import of GDP-mannose from the cytoplasm into the Golgi lumen. In Vanderwaltozyma polyspora (strain ATCC 22028 / DSM 70294 / BCRC 21397 / CBS 2163 / NBRC 10782 / NRRL Y-8283 / UCD 57-17) (Kluyveromyces polysporus), this protein is GDP-mannose transporter 2 (VRG4-2).